Here is a 118-residue protein sequence, read N- to C-terminus: Small ribosomal subunit protein uS13 (118 aa).

The segment at 94 to 118 (SLPVRGQRTKTNARTRKGPRKPIKK) is disordered.

Belongs to the universal ribosomal protein uS13 family. As to quaternary structure, part of the 30S ribosomal subunit. Forms a loose heterodimer with protein S19. Forms two bridges to the 50S subunit in the 70S ribosome.

In terms of biological role, located at the top of the head of the 30S subunit, it contacts several helices of the 16S rRNA. In the 70S ribosome it contacts the 23S rRNA (bridge B1a) and protein L5 of the 50S subunit (bridge B1b), connecting the 2 subunits; these bridges are implicated in subunit movement. Contacts the tRNAs in the A and P-sites. The chain is Small ribosomal subunit protein uS13 from Haemophilus influenzae (strain 86-028NP).